A 427-amino-acid chain; its full sequence is Enolase 2 (427 aa).

Q163 contributes to the (2R)-2-phosphoglycerate binding site. E205 functions as the Proton donor in the catalytic mechanism. The Mg(2+) site is built by D242, E285, and D312. The (2R)-2-phosphoglycerate site is built by K337, R366, S367, and K388. The active-site Proton acceptor is K337.

The protein belongs to the enolase family. As to quaternary structure, component of the RNA degradosome, a multiprotein complex involved in RNA processing and mRNA degradation. It depends on Mg(2+) as a cofactor.

It localises to the cytoplasm. It is found in the secreted. The protein localises to the cell surface. The catalysed reaction is (2R)-2-phosphoglycerate = phosphoenolpyruvate + H2O. It participates in carbohydrate degradation; glycolysis; pyruvate from D-glyceraldehyde 3-phosphate: step 4/5. In terms of biological role, catalyzes the reversible conversion of 2-phosphoglycerate (2-PG) into phosphoenolpyruvate (PEP). It is essential for the degradation of carbohydrates via glycolysis. This chain is Enolase 2, found in Methylococcus capsulatus (strain ATCC 33009 / NCIMB 11132 / Bath).